We begin with the raw amino-acid sequence, 270 residues long: Hematopoietically-expressed homeobox protein HHEX (270 aa).

Residues 1-137 (MQYPHPGPAA…PFLQRPLHKR (137 aa)) are interaction with SOX13. Ser53 bears the Phosphoserine mark. Residues 137-196 (RKGGQVRFSNDQTIELEKKFETQKYLSPPERKRLAKMLQLSERQVKTWFQNRRAKWRRLK) constitute a DNA-binding region (homeobox). Positions 137-270 (RKGGQVRFSN…EGDKSYFNAG (134 aa)) are required for WNT signaling induction. A disordered region spans residues 194-270 (RLKQENPQSN…EGDKSYFNAG (77 aa)). Residues 222-241 (PSEQNKGASLDSSQCSPSPA) are compositionally biased toward polar residues. The segment covering 244 to 260 (EDLESEISEDSDQEVDI) has biased composition (acidic residues).

As to quaternary structure, interacts with CD81; the interaction prevents nuclear translocation of HHEX. Interacts (via N-terminus) with SOX13; abolishes the SOX13-mediated inhibition of WNT-mediated transcriptional activity via competitive inhibition of the SOX13-TCF7 complex. Interacts with EIF4E; the interaction inhibits EIF4E-mediated mRNA nuclear export. In terms of tissue distribution, liver and promyelocytic leukemia cell line HL-60.

The protein resides in the nucleus. Its subcellular location is the nuclear body. The protein localises to the cytoplasm. Its function is as follows. Recognizes the DNA sequence 5'-ATTAA-3'. Transcriptional repressor. Activator of WNT-mediated transcription in conjunction with CTNNB1. Establishes anterior identity at two levels; acts early to enhance canonical WNT-signaling by repressing expression of TLE4, and acts later to inhibit NODAL-signaling by directly targeting NODAL. Inhibits EIF4E-mediated mRNA nuclear export. May play a role in hematopoietic differentiation. The sequence is that of Hematopoietically-expressed homeobox protein HHEX (HHEX) from Homo sapiens (Human).